A 90-amino-acid polypeptide reads, in one-letter code: DNA-directed RNA polymerase subunit omega (90 aa).

Residues 70 to 90 (QEQQEQEAAELAAVSSIMHNR) are disordered.

Belongs to the RNA polymerase subunit omega family. The RNAP catalytic core consists of 2 alpha, 1 beta, 1 beta' and 1 omega subunit. When a sigma factor is associated with the core the holoenzyme is formed, which can initiate transcription.

It catalyses the reaction RNA(n) + a ribonucleoside 5'-triphosphate = RNA(n+1) + diphosphate. Functionally, promotes RNA polymerase assembly. Latches the N- and C-terminal regions of the beta' subunit thereby facilitating its interaction with the beta and alpha subunits. The protein is DNA-directed RNA polymerase subunit omega of Vibrio cholerae serotype O1 (strain ATCC 39541 / Classical Ogawa 395 / O395).